The chain runs to 164 residues: Cell division protein SepF (164 aa).

A disordered region spans residues 21 to 71 (YQQGQQPAQQQQSPVQAVPTPAPAPQQQAKRAPVTPLHKPSTTTRNAAPAE). The span at 22–54 (QQGQQPAQQQQSPVQAVPTPAPAPQQQAKRAPV) shows a compositional bias: low complexity.

The protein belongs to the SepF family. In terms of assembly, homodimer. Interacts with FtsZ.

The protein localises to the cytoplasm. Its function is as follows. Cell division protein that is part of the divisome complex and is recruited early to the Z-ring. Probably stimulates Z-ring formation, perhaps through the cross-linking of FtsZ protofilaments. Its function overlaps with FtsA. The protein is Cell division protein SepF of Clavibacter michiganensis subsp. michiganensis (strain NCPPB 382).